The following is a 432-amino-acid chain: ATP-dependent RNA helicase RhlB (432 aa).

Positions 9–37 (QRFADLPLHAEVIQALNENGFEFCTPIQA) match the Q motif motif. The Helicase ATP-binding domain maps to 40–219 (LPVLLKAKDI…YDHMNDPEKV (180 aa)). 53–60 (AQTGTGKT) is an ATP binding site. Positions 165-168 (DEAD) match the DEAD box motif. The Helicase C-terminal domain occupies 243–390 (KMRLLLTLME…VSRYDREALL (148 aa)). The disordered stretch occupies residues 395-432 (TPVKIHRKHPTSRTRDGAKGAHRSGGARPPRHRTRRPS). Basic residues predominate over residues 423–432 (PPRHRTRRPS).

This sequence belongs to the DEAD box helicase family. RhlB subfamily. In terms of assembly, component of the RNA degradosome, which is a multiprotein complex involved in RNA processing and mRNA degradation.

The protein localises to the cytoplasm. The catalysed reaction is ATP + H2O = ADP + phosphate + H(+). In terms of biological role, DEAD-box RNA helicase involved in RNA degradation. Has RNA-dependent ATPase activity and unwinds double-stranded RNA. This Shewanella denitrificans (strain OS217 / ATCC BAA-1090 / DSM 15013) protein is ATP-dependent RNA helicase RhlB.